The following is a 503-amino-acid chain: NAD(P)H-quinone oxidoreductase chain 4, chloroplastic (503 aa).

The next 13 helical transmembrane spans lie at 4 to 24 (FPWLTIIVVFPISAGSSIFFL), 37 to 57 (ICICLLELLLTTYAFCYHFQL), 87 to 107 (IGPTLLTGFITTLATLAAWPV), 134 to 154 (LLLFFIMWELELIPVYLLLSM), 167 to 187 (FILYTAGGSIFLLMGVPGMGL), 208 to 228 (ALEIIFYFGFFIAYAVKSPII), 242 to 262 (HYSTCMLLAGILLKMGAYGLV), 272 to 292 (AHSIFSPWLMIVGTIQIIYAA), 305 to 325 (IAYSSVSHMGFTIIGIASITD), 330 to 350 (GAILQIISHGFIGAALFFLAG), 386 to 406 (LALPGMSGFFAELVVFFGIIT), 416 to 436 (ILITFVMAIGMILTPIYSLSM), and 462 to 482 (LFVSICIFLPVIGIGIYPDFV).

This sequence belongs to the complex I subunit 4 family.

It localises to the plastid. It is found in the chloroplast thylakoid membrane. The catalysed reaction is a plastoquinone + NADH + (n+1) H(+)(in) = a plastoquinol + NAD(+) + n H(+)(out). It catalyses the reaction a plastoquinone + NADPH + (n+1) H(+)(in) = a plastoquinol + NADP(+) + n H(+)(out). The chain is NAD(P)H-quinone oxidoreductase chain 4, chloroplastic from Drimys granadensis.